A 306-amino-acid chain; its full sequence is Elongation factor Ts (306 aa).

Positions 79-82 (TDFV) are involved in Mg(2+) ion dislocation from EF-Tu.

It belongs to the EF-Ts family.

The protein resides in the cytoplasm. In terms of biological role, associates with the EF-Tu.GDP complex and induces the exchange of GDP to GTP. It remains bound to the aminoacyl-tRNA.EF-Tu.GTP complex up to the GTP hydrolysis stage on the ribosome. The protein is Elongation factor Ts of Mesorhizobium japonicum (strain LMG 29417 / CECT 9101 / MAFF 303099) (Mesorhizobium loti (strain MAFF 303099)).